The sequence spans 231 residues: Ribonuclease 3 (231 aa).

The region spanning 7-135 (IQAIESKLNF…ILGAVYLDGG (129 aa)) is the RNase III domain. Glu48 lines the Mg(2+) pocket. Asp52 is an active-site residue. Mg(2+) contacts are provided by Asn121 and Glu124. The active site involves Glu124. The DRBM domain occupies 160-229 (NPKNRLQQFT…AKQALSTHDN (70 aa)).

The protein belongs to the ribonuclease III family. In terms of assembly, homodimer. Mg(2+) is required as a cofactor.

The protein resides in the cytoplasm. The enzyme catalyses Endonucleolytic cleavage to 5'-phosphomonoester.. Its function is as follows. Digests double-stranded RNA. Involved in the processing of primary rRNA transcript to yield the immediate precursors to the large and small rRNAs (23S and 16S). Processes some mRNAs, and tRNAs when they are encoded in the rRNA operon. Processes pre-crRNA and tracrRNA of type II CRISPR loci if present in the organism. The chain is Ribonuclease 3 from Chlamydia trachomatis serovar L2 (strain ATCC VR-902B / DSM 19102 / 434/Bu).